The chain runs to 530 residues: Putative sulfate transporter YvdB (530 aa).

The next 10 membrane-spanning stretches (helical) occupy residues 19–39 (LIAG…FAIA), 41–61 (GVEP…ISLF), 68–88 (IGGP…QYGL), 91–111 (LLIA…FKLG), 121–141 (VIVG…IANF), 164–184 (LGTF…ILLV), 192–212 (VPGA…FFPD), 241–261 (MVML…ESIL), 313–333 (AVSP…LLVF), and 384–404 (VLFD…VFFI). Residues 420–530 (PVLAKREDPS…FFDHHDEITG (111 aa)) form the STAS domain.

The protein belongs to the SLC26A/SulP transporter (TC 2.A.53) family.

The protein resides in the cell membrane. The sequence is that of Putative sulfate transporter YvdB (yvdB) from Bacillus subtilis (strain 168).